Consider the following 263-residue polypeptide: Endonuclease 8 (263 aa).

Catalysis depends on Pro-2, which acts as the Schiff-base intermediate with DNA. The Proton donor role is filled by Glu-3. The active-site Proton donor; for beta-elimination activity is Lys-53. DNA-binding residues include Gln-70, Arg-125, and Asn-169. An FPG-type zinc finger spans residues 229–263 (KVFHRDGEACERCGGIIEKTTLSSRPFYWCAHCQK). Arg-253 (proton donor; for delta-elimination activity) is an active-site residue.

This sequence belongs to the FPG family. Requires Zn(2+) as cofactor.

The catalysed reaction is 2'-deoxyribonucleotide-(2'-deoxyribose 5'-phosphate)-2'-deoxyribonucleotide-DNA = a 3'-end 2'-deoxyribonucleotide-(2,3-dehydro-2,3-deoxyribose 5'-phosphate)-DNA + a 5'-end 5'-phospho-2'-deoxyribonucleoside-DNA + H(+). Functionally, involved in base excision repair of DNA damaged by oxidation or by mutagenic agents. Acts as a DNA glycosylase that recognizes and removes damaged bases. Has a preference for oxidized pyrimidines, such as thymine glycol, 5,6-dihydrouracil and 5,6-dihydrothymine. Has AP (apurinic/apyrimidinic) lyase activity and introduces nicks in the DNA strand. Cleaves the DNA backbone by beta-delta elimination to generate a single-strand break at the site of the removed base with both 3'- and 5'-phosphates. This is Endonuclease 8 from Salmonella typhi.